Reading from the N-terminus, the 209-residue chain is Na(+)-translocating NADH-quinone reductase subunit D (209 aa).

5 helical membrane-spanning segments follow: residues 42-62 (LVMTLAVTLVTAFSSFFISLI), 66-86 (IPNSVRIIVQMVIIASLVIVV), 103-123 (VFVGLIITNCIVMGRAEAYAM), 131-151 (FMDGIGNGLGYGVILVLVGFV), and 178-198 (NGLFLLAPSAFFIIGLLIWGL).

It belongs to the NqrDE/RnfAE family. In terms of assembly, composed of six subunits; NqrA, NqrB, NqrC, NqrD, NqrE and NqrF.

It localises to the cell inner membrane. The catalysed reaction is a ubiquinone + n Na(+)(in) + NADH + H(+) = a ubiquinol + n Na(+)(out) + NAD(+). NQR complex catalyzes the reduction of ubiquinone-1 to ubiquinol by two successive reactions, coupled with the transport of Na(+) ions from the cytoplasm to the periplasm. NqrA to NqrE are probably involved in the second step, the conversion of ubisemiquinone to ubiquinol. The sequence is that of Na(+)-translocating NADH-quinone reductase subunit D from Yersinia pseudotuberculosis serotype O:1b (strain IP 31758).